A 173-amino-acid polypeptide reads, in one-letter code: Crossover junction endodeoxyribonuclease RuvC (173 aa).

Catalysis depends on residues aspartate 11, glutamate 71, and aspartate 143. Residues aspartate 11, glutamate 71, and aspartate 143 each coordinate Mg(2+).

This sequence belongs to the RuvC family. Homodimer which binds Holliday junction (HJ) DNA. The HJ becomes 2-fold symmetrical on binding to RuvC with unstacked arms; it has a different conformation from HJ DNA in complex with RuvA. In the full resolvosome a probable DNA-RuvA(4)-RuvB(12)-RuvC(2) complex forms which resolves the HJ. Mg(2+) serves as cofactor.

It localises to the cytoplasm. The catalysed reaction is Endonucleolytic cleavage at a junction such as a reciprocal single-stranded crossover between two homologous DNA duplexes (Holliday junction).. The RuvA-RuvB-RuvC complex processes Holliday junction (HJ) DNA during genetic recombination and DNA repair. Endonuclease that resolves HJ intermediates. Cleaves cruciform DNA by making single-stranded nicks across the HJ at symmetrical positions within the homologous arms, yielding a 5'-phosphate and a 3'-hydroxyl group; requires a central core of homology in the junction. The consensus cleavage sequence is 5'-(A/T)TT(C/G)-3'. Cleavage occurs on the 3'-side of the TT dinucleotide at the point of strand exchange. HJ branch migration catalyzed by RuvA-RuvB allows RuvC to scan DNA until it finds its consensus sequence, where it cleaves and resolves the cruciform DNA. This is Crossover junction endodeoxyribonuclease RuvC from Brucella abortus (strain 2308).